Here is a 179-residue protein sequence, read N- to C-terminus: NADH dehydrogenase [ubiquinone] 1 beta subcomplex subunit 9 (179 aa).

Residue Ala2 is modified to N-acetylalanine. Ser85 is subject to Phosphoserine. Residues 136 to 162 are disordered; that stretch reads EVKQLQEETPPGGPLTEALPPARKEGD.

It belongs to the complex I LYR family. As to quaternary structure, mammalian complex I is composed of 45 different subunits.

It is found in the mitochondrion inner membrane. Accessory subunit of the mitochondrial membrane respiratory chain NADH dehydrogenase (Complex I), that is believed to be not involved in catalysis. Complex I functions in the transfer of electrons from NADH to the respiratory chain. The immediate electron acceptor for the enzyme is believed to be ubiquinone. This is NADH dehydrogenase [ubiquinone] 1 beta subcomplex subunit 9 (NDUFB9) from Pan troglodytes (Chimpanzee).